The chain runs to 687 residues: Glycine--tRNA ligase beta subunit (687 aa).

Belongs to the class-II aminoacyl-tRNA synthetase family. In terms of assembly, tetramer of two alpha and two beta subunits.

The protein resides in the cytoplasm. The enzyme catalyses tRNA(Gly) + glycine + ATP = glycyl-tRNA(Gly) + AMP + diphosphate. In Geobacter sp. (strain M21), this protein is Glycine--tRNA ligase beta subunit.